The sequence spans 1363 residues: Neurexin-1 (1363 aa).

Over 1–1287 (SKRRDMTVFS…EVIRESSSTT (1287 aa)) the chain is Extracellular. An N-linked (GlcNAc...) asparagine glycan is attached at Asn-49. The EGF-like 1 domain occupies 67 to 105 (QSRLCAREDVCLNGGVCSVLNDQAVCDCSQTGFRGKDCS). Disulfide bonds link Cys-71-Cys-83, Cys-77-Cys-92, and Cys-94-Cys-104. 2 consecutive Laminin G-like domains span residues 132–329 (IATF…AFKC) and 336–528 (DPIT…KPSC). Ca(2+) contacts are provided by Asp-178, Leu-195, and Met-263. 5 disulfide bridges follow: Cys-293-Cys-329, Cys-499-Cys-528, Cys-536-Cys-547, Cys-541-Cys-556, and Cys-558-Cys-568. Residues 532–569 (TAKPCLSNPCKNNGVCRDGWNRYVCDCSGTGYLGRSCE) enclose the EGF-like 2 domain. 2 consecutive Laminin G-like domains span residues 574 to 747 (ILSY…IDYC) and 761 to 936 (DPVT…ERGC). A glycan (N-linked (GlcNAc...) asparagine) is linked at Asn-646. 4 disulfide bridges follow: Cys-908–Cys-936, Cys-943–Cys-954, Cys-948–Cys-963, and Cys-965–Cys-975. The 38-residue stretch at 939–976 (PSTTCQEDSCANQGVCLQQWDGFSCDCSMTSFSGPLCN) folds into the EGF-like 3 domain. In terms of domain architecture, Laminin G-like 5 spans 982-1180 (YIFSKGGGQI…DANIVIEGNV (199 aa)). Asn-1079 carries N-linked (GlcNAc...) asparagine glycosylation. The interval 1244-1280 (CPSDDEDIDPCEPSSGGLANPTRAGGGREYPGSSEVI) is disordered. A helical membrane pass occupies residues 1288 to 1308 (GMVVGIVAAAALCILILLYAM). At 1309–1363 (YKYRNRDEGSYHVDESRNYISNSAQSNGAVIKEKQPNSAKSSNKNKKNKDKEYYV) the chain is on the cytoplasmic side. Residues 1330 to 1363 (NSAQSNGAVIKEKQPNSAKSSNKNKKNKDKEYYV) are disordered.

This sequence belongs to the neurexin family. The cytoplasmic C-terminal region binds to CASK. The laminin G-like domain 1 binds to NXPH1. Specific isoforms bind to alpha-dystroglycan and to alpha-latrotoxin. N- and O-glycosylated.

Its subcellular location is the membrane. Its function is as follows. Neuronal cell surface protein that may be involved in cell recognition and cell adhesion. May mediate intracellular signaling. The protein is Neurexin-1 (NRXN1) of Gallus gallus (Chicken).